A 262-amino-acid polypeptide reads, in one-letter code: Type III pantothenate kinase (262 aa).

9–16 serves as a coordination point for ATP; it reads DAGNSRIK. Substrate contacts are provided by residues Tyr-96 and 103-106; that span reads GSDR. The active-site Proton acceptor is Asp-105. Thr-129 serves as a coordination point for ATP. Thr-189 contributes to the substrate binding site.

This sequence belongs to the type III pantothenate kinase family. As to quaternary structure, homodimer. Requires NH4(+) as cofactor. It depends on K(+) as a cofactor.

The protein localises to the cytoplasm. The enzyme catalyses (R)-pantothenate + ATP = (R)-4'-phosphopantothenate + ADP + H(+). It participates in cofactor biosynthesis; coenzyme A biosynthesis; CoA from (R)-pantothenate: step 1/5. In terms of biological role, catalyzes the phosphorylation of pantothenate (Pan), the first step in CoA biosynthesis. This chain is Type III pantothenate kinase, found in Burkholderia vietnamiensis (strain G4 / LMG 22486) (Burkholderia cepacia (strain R1808)).